Here is a 493-residue protein sequence, read N- to C-terminus: Amino acid permease 2 (493 aa).

Topologically, residues 1–49 are cytoplasmic; that stretch reads MGETAAANNHRHHHHHGHQVFDVASHDFVPPQPAFKCFDDDGRLKRTGT. 2 consecutive transmembrane segments (helical) span residues 50–70 and 71–91; these read VWTA…LSLA and WAIA…FSLV. The Cytoplasmic portion of the chain corresponds to 92-138; that stretch reads TLYSSTLLSDCYRTGDAVSGKRNYTYMDAVRSILGGFKFKICGLIQY. The helical transmembrane segment at 139–159 threads the bilayer; it reads LNLFGIAIGYTIAASISMMAI. Residues 160-175 are Extracellular-facing; it reads KRSNCFHKSGGKDPCH. The chain crosses the membrane as a helical span at residues 176–196; that stretch reads MSSNPYMIVFGVAEILLSQVP. At 197 to 200 the chain is on the cytoplasmic side; it reads DFDQ. A helical membrane pass occupies residues 201-221; it reads IWWISIVAAVMSFTYSAIGLA. The Extracellular segment spans residues 222 to 253; that stretch reads LGIVQVAANGVFKGSLTGISIGTVTQTQKIWR. Residues 254-274 traverse the membrane as a helical segment; it reads TFQALGDIAFAYSYSVVLIEI. The Cytoplasmic segment spans residues 275 to 293; the sequence is QDTVRSPPAESKTMKKATK. A helical membrane pass occupies residues 294–314; it reads ISIAVTTIFYMLCGSMGYAAF. Residues 315 to 340 lie on the Extracellular side of the membrane; the sequence is GDAAPGNLLTGFGFYNPFWLLDIANA. A helical transmembrane segment spans residues 341 to 361; that stretch reads AIVVHLVGAYQVFAQPIFAFI. The Cytoplasmic portion of the chain corresponds to 362–396; sequence EKSVAERYPDNDFLSKEFEIRIPGFKSPYKVNVFR. A helical membrane pass occupies residues 397-417; it reads MVYRSGFVVTTTVISMLMPFF. The Extracellular segment spans residues 418–419; it reads ND. Residues 420–440 form a helical membrane-spanning segment; sequence VVGILGALGFWPLTVYFPVEM. The Cytoplasmic segment spans residues 441–458; it reads YIKQRKVEKWSTRWVCLQ. The helical transmembrane segment at 459-479 threads the bilayer; that stretch reads MLSVACLVISVVAGVGSIAGV. Residues 480 to 493 are Extracellular-facing; that stretch reads MLDLKVYKPFKSTY.

It belongs to the amino acid/polyamine transporter 2 family. Amino acid/auxin permease (AAAP) (TC 2.A.18.2) subfamily. In terms of tissue distribution, highly expressed in developing pods. Found in the vascular strands of siliques, cotyledons, leaves and roots, in the inner phloem of stems, and in the funiculi. Lower levels of expression in flowers. Not expressed in seeds.

It localises to the cell membrane. Its activity is regulated as follows. Inhibited by diethylpyrocarbonate (DEPC). Functionally, amino acid-proton symporter. Stereospecific transporter with a broad specificity for histidine, arginine, glutamate and neutral amino acids, favoring small amino acids such as alanine, asparagine and glutamine. Also accepts large aromatic residues such as phenlalanine or tyrosine. Has a much higher affinity for basic amino acids as compared with AAP1. May function in xylem-to-phloem transfer and in uptake of amino acids assimilated in the green silique tissue. The sequence is that of Amino acid permease 2 (AAP2) from Arabidopsis thaliana (Mouse-ear cress).